A 318-amino-acid polypeptide reads, in one-letter code: Trans-prenyltransferase (318 aa).

A helical membrane pass occupies residues 1-21 (MLHLIYISIIVVLIIILISYT). Residues Lys85, Arg88, and His122 each coordinate isopentenyl diphosphate. Residues Asp129 and Asp135 each contribute to the Mg(2+) site. Arg140 provides a ligand contact to dimethylallyl diphosphate. Arg141 is a binding site for isopentenyl diphosphate. Dimethylallyl diphosphate contacts are provided by Lys216, Thr217, and Gln254.

Belongs to the FPP/GGPP synthase family. Asfivirus trans-prenyltransferase subfamily. Requires Mg(2+) as cofactor.

Its subcellular location is the host endoplasmic reticulum. The protein localises to the host membrane. The catalysed reaction is isopentenyl diphosphate + dimethylallyl diphosphate = (2E)-geranyl diphosphate + diphosphate. The enzyme catalyses isopentenyl diphosphate + (2E)-geranyl diphosphate = (2E,6E)-farnesyl diphosphate + diphosphate. It carries out the reaction isopentenyl diphosphate + (2E,6E)-farnesyl diphosphate = (2E,6E,10E)-geranylgeranyl diphosphate + diphosphate. It catalyses the reaction isopentenyl diphosphate + (2E,6E,10E)-geranylgeranyl diphosphate = (2E,6E,10E,14E)-geranylfarnesyl diphosphate + diphosphate. Its pathway is isoprenoid biosynthesis; farnesyl diphosphate biosynthesis; farnesyl diphosphate from geranyl diphosphate and isopentenyl diphosphate: step 1/1. It functions in the pathway isoprenoid biosynthesis; geranyl diphosphate biosynthesis; geranyl diphosphate from dimethylallyl diphosphate and isopentenyl diphosphate: step 1/1. The protein operates within isoprenoid biosynthesis; geranylgeranyl diphosphate biosynthesis; geranylgeranyl diphosphate from farnesyl diphosphate and isopentenyl diphosphate: step 1/1. Trans-prenyltransferase that catalyzes the sequential condensation of isopentenyl diphosphate (IPP) with different allylic diphosphates, such as dimethylallyl diphosphate (DMAPP), geranyl diphosphate (GPP), farnesyl diphosphate (FPP) and geranylgeranyl diphosphate (GGPP), farnesyl diphosphate being the best allylic substrate. The protein is Trans-prenyltransferase of African swine fever virus (strain Badajoz 1971 Vero-adapted) (Ba71V).